A 401-amino-acid polypeptide reads, in one-letter code: CLIP domain-containing serine protease B9 (401 aa).

The signal sequence occupies residues 1-26; it reads MTSYNRSVAWLTVCVLLALHIGGSHQ. The region spanning 30-85 is the Clip domain; the sequence is QCTTPTRLRGRCISIYECDSILDYFKQRILTWEEREFLRKSQCTGATSGRQPFVCC. 3 cysteine pairs are disulfide-bonded: Cys-31–Cys-84, Cys-41–Cys-72, and Cys-47–Cys-85. Asn-88 is a glycosylation site (N-linked (GlcNAc...) asparagine). Positions 148–400 constitute a Peptidase S1 domain; sequence IYGGQNADID…YMAWVRSNIK (253 aa). A disulfide bridge connects residues Cys-178 and Cys-194. Active-site charge relay system residues include His-193 and Asp-257. 2 cysteine pairs are disulfide-bonded: Cys-322–Cys-339 and Cys-349–Cys-376. Residue Asn-330 is glycosylated (N-linked (GlcNAc...) asparagine). Catalysis depends on Ser-353, which acts as the Charge relay system.

It belongs to the peptidase S1 family. CLIP subfamily. Forms a covalent heterodimer with SRPN2; the interaction inhibits CLIPB9 protease activity. In terms of processing, proteolytic cleavage is necessary for activation.

The protein resides in the secreted. With respect to regulation, inhibited by serpin SRPN2. Serine protease that functions in the melanization-mediated immune response. Cleaves and activates prophenoloxidase (PPO), which is required for the activation of the prophenoloxidase cascade probably following the recognition of pathogen-derived products. This Anopheles gambiae (African malaria mosquito) protein is CLIP domain-containing serine protease B9.